A 310-amino-acid chain; its full sequence is N-acetyl-gamma-glutamyl-phosphate reductase (310 aa).

C117 is a catalytic residue.

This sequence belongs to the NAGSA dehydrogenase family. Type 2 subfamily.

It localises to the cytoplasm. The catalysed reaction is N-acetyl-L-glutamate 5-semialdehyde + phosphate + NADP(+) = N-acetyl-L-glutamyl 5-phosphate + NADPH + H(+). It functions in the pathway amino-acid biosynthesis; L-arginine biosynthesis; N(2)-acetyl-L-ornithine from L-glutamate: step 3/4. Functionally, catalyzes the NADPH-dependent reduction of N-acetyl-5-glutamyl phosphate to yield N-acetyl-L-glutamate 5-semialdehyde. This chain is N-acetyl-gamma-glutamyl-phosphate reductase, found in Rhizobium johnstonii (strain DSM 114642 / LMG 32736 / 3841) (Rhizobium leguminosarum bv. viciae).